Here is a 473-residue protein sequence, read N- to C-terminus: Cysteine--tRNA ligase (473 aa).

Residue C28 participates in Zn(2+) binding. The short motif at 30–40 (MTVYDFCHIGH) is the 'HIGH' region element. C212, H237, and E241 together coordinate Zn(2+). A 'KMSKS' region motif is present at residues 277–281 (KMSKS). Position 280 (K280) interacts with ATP.

It belongs to the class-I aminoacyl-tRNA synthetase family. In terms of assembly, monomer. Requires Zn(2+) as cofactor.

It is found in the cytoplasm. It carries out the reaction tRNA(Cys) + L-cysteine + ATP = L-cysteinyl-tRNA(Cys) + AMP + diphosphate. This chain is Cysteine--tRNA ligase, found in Polynucleobacter necessarius subsp. necessarius (strain STIR1).